Consider the following 288-residue polypeptide: Stage IV sporulation protein FB (288 aa).

Over methionine 1–lysine 10 the chain is Mother cell cytoplasmic. The helical transmembrane segment at isoleucine 11 to methionine 30 threads the bilayer. A topological domain (forespore intermembrane space) is located at residue lysine 31. A helical membrane pass occupies residues alanine 32 to tryptophan 56. A Zn(2+)-binding site is contributed by histidine 43. Glutamate 44 is an active-site residue. Histidine 47 lines the Zn(2+) pocket. The Mother cell cytoplasmic portion of the chain corresponds to arginine 57–glutamate 83. Residues phenylalanine 84–alanine 105 form a helical membrane-spanning segment. Over glutamate 106–leucine 126 the chain is Forespore intermembrane space. The helical transmembrane segment at phenylalanine 127–phenylalanine 146 threads the bilayer. Aspartate 137 contributes to the Zn(2+) binding site. Residues serine 147–lysine 161 lie on the Mother cell cytoplasmic side of the membrane. Residues threonine 162–isoleucine 178 form a helical membrane-spanning segment. Residue proline 179 is a topological domain, forespore intermembrane space. A helical membrane pass occupies residues leucine 180 to tyrosine 199. At arginine 200–tyrosine 288 the chain is on the mother cell cytoplasmic side.

The protein belongs to the peptidase M50B family. As to quaternary structure, forms a complex with SpoIVFA and BofA localized in the mother-cell membrane surrounding the forespore. Zn(2+) is required as a cofactor.

It is found in the forespore outer membrane. Its function is as follows. Implicated in the coupling of mother cell to forespore gene expression. Required for spore formation. Processes the pro-sigma K factor. The polypeptide is Stage IV sporulation protein FB (spoIVFB) (Bacillus subtilis (strain 168)).